Reading from the N-terminus, the 128-residue chain is MPKRAIIPAGSGVPLAPFVPGTLADGVLYVSGTLPFDKDNNVVHVGDAAAQTRHVLEIIKSVIETAGGSMDDVTMNSIFITDWANYGAVNQVYAEYFPGEKPARFCIQCGLVKPDALIEIASIAHLGK.

It belongs to the RutC family.

It carries out the reaction (Z)-3-aminoacrylate + H2O + H(+) = 3-oxopropanoate + NH4(+). Involved in pyrimidine catabolism. Catalyzes the deamination of 3-aminoacrylate to malonic semialdehyde, a reaction that can also occur spontaneously. RutC may facilitate the reaction and modulate the metabolic fitness, rather than catalyzing essential functions. This chain is 3-aminoacrylate deaminase RutC, found in Pantoea ananatis (strain LMG 20103).